The sequence spans 518 residues: Coiled-coil domain-containing protein 82 (518 aa).

Positions 1–14 (MVHVRRHETRKNSK) are enriched in basic residues. Positions 1–266 (MVHVRRHETR…EDDYRYDEDG (266 aa)) are disordered. Basic and acidic residues predominate over residues 16-27 (QKPEQKSRVDWH). Over residues 38 to 67 (DSDEELDSNEELDSDEEHDSGESIDSDEEL) the composition is skewed to acidic residues. Over residues 68–89 (DISKKSDINELPEKETELKLIK) the composition is skewed to basic and acidic residues. Over residues 92–107 (SQGSNSKHLTNTSNSS) the composition is skewed to polar residues. A compositionally biased stretch (basic and acidic residues) spans 111 to 127 (EQLKETKHNDLPDDEAH). Residues Ser170 and Ser194 each carry the phosphoserine modification. Residues 191–201 (DECSSLEMEQE) show a composition bias toward acidic residues. Position 202 is a phosphothreonine (Thr202). Positions 204 to 232 (EKSSAARKREYHQKLQELSERSRQRRRRN) form a coiled coil. The span at 215-225 (HQKLQELSERS) shows a compositional bias: basic and acidic residues. Positions 249–266 (GEEDEDEDEDDYRYDEDG) are enriched in acidic residues. Ser305 is modified (phosphoserine).

In Mus musculus (Mouse), this protein is Coiled-coil domain-containing protein 82 (Ccdc82).